A 517-amino-acid polypeptide reads, in one-letter code: Glutamyl-tRNA(Gln) amidotransferase subunit A, mitochondrial (517 aa).

Active-site charge relay system residues include Lys-58 and Ser-131. Residues 106 to 132 (FGMGTHSTHSAHGPVASPAGRSAGGSS) form a disordered region. The active-site Acyl-ester intermediate is the Ser-155.

Belongs to the amidase family. GatA subfamily. In terms of assembly, subunit of the heterotrimeric GatCAB amidotransferase (AdT) complex, composed of A, B and C subunits.

Its subcellular location is the mitochondrion. The enzyme catalyses L-glutamyl-tRNA(Gln) + L-glutamine + ATP + H2O = L-glutaminyl-tRNA(Gln) + L-glutamate + ADP + phosphate + H(+). Allows the formation of correctly charged Gln-tRNA(Gln) through the transamidation of misacylated Glu-tRNA(Gln) in the mitochondria. The reaction takes place in the presence of glutamine and ATP through an activated gamma-phospho-Glu-tRNA(Gln). The protein is Glutamyl-tRNA(Gln) amidotransferase subunit A, mitochondrial of Pyricularia oryzae (strain 70-15 / ATCC MYA-4617 / FGSC 8958) (Rice blast fungus).